Consider the following 72-residue polypeptide: Prokaryotic ubiquitin-like protein Pup (72 aa).

Gly residues predominate over residues 1 to 10; it reads MATRDSGGGQ. The tract at residues 1-41 is disordered; that stretch reads MATRDSGGGQQRADRRAEEIDDVATEDTSASDLKERHEKLS. Residues 27–61 adopt a coiled-coil conformation; the sequence is DTSASDLKERHEKLSEDVDSLLDEIDDVLEENAEE. The tract at residues 28–66 is ARC ATPase binding; sequence TSASDLKERHEKLSEDVDSLLDEIDDVLEENAEEFVKGY. Residues 32 to 41 are compositionally biased toward basic and acidic residues; the sequence is DLKERHEKLS. Q72 carries the post-translational modification Deamidated glutamine. Q72 is covalently cross-linked (Isoglutamyl lysine isopeptide (Gln-Lys) (interchain with K-? in acceptor proteins)).

It belongs to the prokaryotic ubiquitin-like protein family. In terms of assembly, strongly interacts with the proteasome-associated ATPase ARC through a hydrophobic interface; the interacting region of Pup lies in its C-terminal half. There is one Pup binding site per ARC hexamer ring. Is modified by deamidation of its C-terminal glutamine to glutamate by the deamidase Dop, a prerequisite to the subsequent pupylation process.

It participates in protein degradation; proteasomal Pup-dependent pathway. Protein modifier that is covalently attached to lysine residues of substrate proteins, thereby targeting them for proteasomal degradation. The tagging system is termed pupylation. The protein is Prokaryotic ubiquitin-like protein Pup of Frankia casuarinae (strain DSM 45818 / CECT 9043 / HFP020203 / CcI3).